The chain runs to 217 residues: Large ribosomal subunit protein bL25 (217 aa).

It belongs to the bacterial ribosomal protein bL25 family. CTC subfamily. Part of the 50S ribosomal subunit; part of the 5S rRNA/L5/L18/L25 subcomplex. Contacts the 5S rRNA. Binds to the 5S rRNA independently of L5 and L18.

Functionally, this is one of the proteins that binds to the 5S RNA in the ribosome where it forms part of the central protuberance. In Methylobacterium sp. (strain 4-46), this protein is Large ribosomal subunit protein bL25.